Here is a 122-residue protein sequence, read N- to C-terminus: Large ribosomal subunit protein uL14 (122 aa).

It belongs to the universal ribosomal protein uL14 family. As to quaternary structure, part of the 50S ribosomal subunit. Forms a cluster with proteins L3 and L19. In the 70S ribosome, L14 and L19 interact and together make contacts with the 16S rRNA in bridges B5 and B8.

Functionally, binds to 23S rRNA. Forms part of two intersubunit bridges in the 70S ribosome. This Chlamydia pneumoniae (Chlamydophila pneumoniae) protein is Large ribosomal subunit protein uL14.